The chain runs to 621 residues: MDFDAIVIGGGHAGIEAALALSRLDFKTLMITQNLDTIGKLSCNPAIGGLAKGNMVREIDALGGEMGRIIDFSMIQFRVLNKSRGPAVQAPRAQADKLMYQTKAKETLERQDNLDLFQDTVVDFLLNSMRNEIKGVVTERGNKFRSNVVVLTTGTFLRGKIFIGEYRANMGRLAEFSAYGLDKTLLSLGFEMGRLKTGTPARIHKKSVDFSKTEVQFGDSDIIPFSFSNGNLDKSQLSCYVTYTNKRTHEIISENMHLSPLYSGEIVGNGPRYCPSIEDKIVKFKDKDRHQIFIEPEGFNTEEMYLNGLSSSLPENIQQKFINSIEGLEHAIITRPGYAVEYDYINPIELYPNLESKRVKGLFVAGQTNGSSGYEEAAAQGLMAGINAALRLQNKKPMILTRTSSYIGVLIDDLVTKGTKEPYRMFTSRAEHRLNLRHDTSDKRLIKIGYDLGLVDEERYSKYLFKKRRVEEIKELLKQRRLSLKDVADEQLKKHVSKDFYHILKDPSISLDNLIKIDPSLSDSKVILEQVELDVKYEGYINRQKDLIKKLNNLELVKLPFDFNYEIIEGLSREAREKFSKVQPATLAQASRIPGIRNTDITVLFIYFSNPKNKVVLNFSL.

An FAD-binding site is contributed by 9–14; the sequence is GGGHAG. Residue 270–284 participates in NAD(+) binding; it reads GPRYCPSIEDKIVKF.

This sequence belongs to the MnmG family. Homodimer. Heterotetramer of two MnmE and two MnmG subunits. Requires FAD as cofactor.

The protein resides in the cytoplasm. In terms of biological role, NAD-binding protein involved in the addition of a carboxymethylaminomethyl (cmnm) group at the wobble position (U34) of certain tRNAs, forming tRNA-cmnm(5)s(2)U34. This is tRNA uridine 5-carboxymethylaminomethyl modification enzyme MnmG from Borrelia garinii subsp. bavariensis (strain ATCC BAA-2496 / DSM 23469 / PBi) (Borreliella bavariensis).